The chain runs to 101 residues: Small ribosomal subunit protein uS14 (101 aa).

The protein belongs to the universal ribosomal protein uS14 family. In terms of assembly, part of the 30S ribosomal subunit. Contacts proteins S3 and S10.

Its function is as follows. Binds 16S rRNA, required for the assembly of 30S particles and may also be responsible for determining the conformation of the 16S rRNA at the A site. The sequence is that of Small ribosomal subunit protein uS14 from Nitrosospira multiformis (strain ATCC 25196 / NCIMB 11849 / C 71).